A 223-amino-acid polypeptide reads, in one-letter code: Dephospho-CoA kinase (223 aa).

Residues 3–204 enclose the DPCK domain; that stretch reads VFGLSGGAGS…AGRHRFRVAR (202 aa). 11–16 provides a ligand contact to ATP; that stretch reads GSGKST.

The protein belongs to the CoaE family.

It localises to the cytoplasm. It catalyses the reaction 3'-dephospho-CoA + ATP = ADP + CoA + H(+). It participates in cofactor biosynthesis; coenzyme A biosynthesis; CoA from (R)-pantothenate: step 5/5. Its function is as follows. Catalyzes the phosphorylation of the 3'-hydroxyl group of dephosphocoenzyme A to form coenzyme A. The chain is Dephospho-CoA kinase from Anaplasma marginale (strain St. Maries).